The sequence spans 120 residues: NAD(P)H-quinone oxidoreductase subunit 3, chloroplastic (120 aa).

3 helical membrane-spanning segments follow: residues 7–27, 64–84, and 88–108; these read YETFWIFLLISSLMPILAFLI, MFALVFVVFDVETVFLYPWAM, and ILGISTFIEASIFVLILIVGS.

It belongs to the complex I subunit 3 family. In terms of assembly, NDH is composed of at least 16 different subunits, 5 of which are encoded in the nucleus.

Its subcellular location is the plastid. It localises to the chloroplast thylakoid membrane. The catalysed reaction is a plastoquinone + NADH + (n+1) H(+)(in) = a plastoquinol + NAD(+) + n H(+)(out). It carries out the reaction a plastoquinone + NADPH + (n+1) H(+)(in) = a plastoquinol + NADP(+) + n H(+)(out). Functionally, NDH shuttles electrons from NAD(P)H:plastoquinone, via FMN and iron-sulfur (Fe-S) centers, to quinones in the photosynthetic chain and possibly in a chloroplast respiratory chain. The immediate electron acceptor for the enzyme in this species is believed to be plastoquinone. Couples the redox reaction to proton translocation, and thus conserves the redox energy in a proton gradient. The protein is NAD(P)H-quinone oxidoreductase subunit 3, chloroplastic of Cycas taitungensis (Prince sago).